Reading from the N-terminus, the 134-residue chain is MSWQTYVDDHLMCDIEGHEDHRLTAAAIVGHDGSVWAQSATFPQFRPEEMNGIMTDFNEPGHLAPTGLHLGGTKYMVIQGEAGAVIRGKKGSGGITIKKTGQALVFGIYEEPVTPGQCNMVVERLGDYLLEQGL.

The cysteines at positions 13 and 118 are disulfide-linked. The short motif at 84-100 (AVIRGKKGSGGITIKKT) is the Involved in PIP2 interaction element. The residue at position 114 (threonine 114) is a Phosphothreonine.

It belongs to the profilin family. In terms of assembly, occurs in many kinds of cells as a complex with monomeric actin in a 1:1 ratio. In terms of processing, phosphorylated by MAP kinases.

It localises to the cytoplasm. Its subcellular location is the cytoskeleton. Functionally, binds to actin and affects the structure of the cytoskeleton. At high concentrations, profilin prevents the polymerization of actin, whereas it enhances it at low concentrations. This Olea europaea (Common olive) protein is Profilin-5.